The sequence spans 205 residues: Outer-membrane lipoprotein LolB (205 aa).

The signal sequence occupies residues 1–17 (MFLRHCITFTLIALLAG). The N-palmitoyl cysteine moiety is linked to residue cysteine 18. A lipid anchor (S-diacylglycerol cysteine) is attached at cysteine 18.

This sequence belongs to the LolB family. In terms of assembly, monomer.

It localises to the cell outer membrane. Its function is as follows. Plays a critical role in the incorporation of lipoproteins in the outer membrane after they are released by the LolA protein. The protein is Outer-membrane lipoprotein LolB of Pseudomonas putida (strain ATCC 47054 / DSM 6125 / CFBP 8728 / NCIMB 11950 / KT2440).